A 651-amino-acid polypeptide reads, in one-letter code: DNA mismatch repair protein MutL (651 aa).

This sequence belongs to the DNA mismatch repair MutL/HexB family.

Functionally, this protein is involved in the repair of mismatches in DNA. It is required for dam-dependent methyl-directed DNA mismatch repair. May act as a 'molecular matchmaker', a protein that promotes the formation of a stable complex between two or more DNA-binding proteins in an ATP-dependent manner without itself being part of a final effector complex. The sequence is that of DNA mismatch repair protein MutL from Streptococcus mutans serotype c (strain ATCC 700610 / UA159).